We begin with the raw amino-acid sequence, 336 residues long: tRNA N6-adenosine threonylcarbamoyltransferase (336 aa).

Histidine 111, histidine 115, and tyrosine 132 together coordinate Fe cation. Residues 132–136 (YLSGG), aspartate 164, aspartate 185, and serine 264 each bind substrate. Residue aspartate 292 coordinates Fe cation.

It belongs to the KAE1 / TsaD family. Requires Fe(2+) as cofactor.

It localises to the cytoplasm. It carries out the reaction L-threonylcarbamoyladenylate + adenosine(37) in tRNA = N(6)-L-threonylcarbamoyladenosine(37) in tRNA + AMP + H(+). Functionally, required for the formation of a threonylcarbamoyl group on adenosine at position 37 (t(6)A37) in tRNAs that read codons beginning with adenine. Is probably involved in the transfer of the threonylcarbamoyl moiety of threonylcarbamoyl-AMP (TC-AMP) to the N6 group of A37. In Sulfurisphaera tokodaii (strain DSM 16993 / JCM 10545 / NBRC 100140 / 7) (Sulfolobus tokodaii), this protein is tRNA N6-adenosine threonylcarbamoyltransferase.